Here is a 477-residue protein sequence, read N- to C-terminus: Probable malate:quinone oxidoreductase (477 aa).

The protein belongs to the MQO family. It depends on FAD as a cofactor.

It carries out the reaction (S)-malate + a quinone = a quinol + oxaloacetate. The protein operates within carbohydrate metabolism; tricarboxylic acid cycle; oxaloacetate from (S)-malate (quinone route): step 1/1. The sequence is that of Probable malate:quinone oxidoreductase from Synechococcus sp. (strain RCC307).